Here is a 154-residue protein sequence, read N- to C-terminus: 6,7-dimethyl-8-ribityllumazine synthase (154 aa).

5-amino-6-(D-ribitylamino)uracil contacts are provided by residues F21, 55-57 (AFE), and 79-81 (CVI). 84–85 (AT) is a binding site for (2S)-2-hydroxy-3-oxobutyl phosphate. H87 (proton donor) is an active-site residue. F111 is a binding site for 5-amino-6-(D-ribitylamino)uracil. R125 is a (2S)-2-hydroxy-3-oxobutyl phosphate binding site.

This sequence belongs to the DMRL synthase family. In terms of assembly, forms an icosahedral capsid composed of 60 subunits, arranged as a dodecamer of pentamers.

It catalyses the reaction (2S)-2-hydroxy-3-oxobutyl phosphate + 5-amino-6-(D-ribitylamino)uracil = 6,7-dimethyl-8-(1-D-ribityl)lumazine + phosphate + 2 H2O + H(+). It functions in the pathway cofactor biosynthesis; riboflavin biosynthesis; riboflavin from 2-hydroxy-3-oxobutyl phosphate and 5-amino-6-(D-ribitylamino)uracil: step 1/2. Functionally, catalyzes the formation of 6,7-dimethyl-8-ribityllumazine by condensation of 5-amino-6-(D-ribitylamino)uracil with 3,4-dihydroxy-2-butanone 4-phosphate. This is the penultimate step in the biosynthesis of riboflavin. This Macrococcus caseolyticus (strain JCSC5402) (Macrococcoides caseolyticum) protein is 6,7-dimethyl-8-ribityllumazine synthase.